Reading from the N-terminus, the 507-residue chain is MLDRRTLMGGILSMAGSKATGAALPGRRLRVFVATLGTETNSFSPLPTGLDAFRATMLWRPGEHPDFATEATGPLWAARERAREGRYEVIEGTCAFAMPGGPVSAQAYQLLRDEILDQLRRAMPVDIVAFGLHGAMLAFGEDECEADLLERARAIVGPDVALGAELDLHAHLSQRLVRAADVLVAFKYYPHIDYVERARDLLDLLERIRAGEIMPTSSLFNCQMVAGLATQSSPMKELVADLFEFERRGEVLSGSLIQGFRAGDVARMGSKVLIYTNNDQPAAASIAQDFGRRYQAMASIMKGNGPERSFAADIELAKAATAYPVILVDSSDNPGGGASGDNMALARAMLDNDLVPSCIGPIWDPLAVQLGFEAGLGADFSLRVGGKVGEASGLPLDVRGKITGLAENVTQNLQGSRPPLGRVVCISTAGLDIIVSEIRDQCYGPDMFRALGVEPANKRYVAVKSSEQWRIGFGDMGRSVIYVASSQQSSIRHYHKRSRPMWPFEPV.

The N-terminal stretch at 1 to 21 (MLDRRTLMGGILSMAGSKATG) is a signal peptide. Residues Asp167, His169, and His191 each coordinate Zn(2+).

Belongs to the peptidase M81 family. Zn(2+) serves as cofactor.

Its activity is regulated as follows. Inhibited by the metal chelators EDTA and 1,10-phenanthroline. Involved in peptidolytic degradation of cyclic heptapeptide hepatotoxin microcystin (MC). Cleaves both linear MC and the tetrapeptide degradation product of MC. Cleaves the Adda-Glu peptide bond of linear MC heptapeptides. This chain is Microcystinase C, found in Sphingomonas sp.